We begin with the raw amino-acid sequence, 46 residues long: U1-plectoxin-Pt1f (46 aa).

Disulfide bonds link cysteine 4–cysteine 18, cysteine 11–cysteine 24, cysteine 17–cysteine 35, cysteine 21–cysteine 44, and cysteine 26–cysteine 33.

Belongs to the neurotoxin 02 (plectoxin) family. 02 (plectoxin) subfamily. Expressed by the venom gland.

It is found in the secreted. Functionally, potent toxin that may paralyze and/or kill insect pests such as H.virescens (lepidoptera), S.exigua (beet armyworm) and M.sexta (tobacco hornworm). This chain is U1-plectoxin-Pt1f, found in Plectreurys tristis (Spider).